A 386-amino-acid chain; its full sequence is Probable Xaa-Pro aminopeptidase PMAA_074180 (386 aa).

Mn(2+) contacts are provided by Asp-160, Asp-171, Glu-311, and Glu-350.

Belongs to the peptidase M24B family. The cofactor is Mn(2+).

It catalyses the reaction Release of any N-terminal amino acid, including proline, that is linked to proline, even from a dipeptide or tripeptide.. Functionally, catalyzes the removal of a penultimate prolyl residue from the N-termini of peptides. This Talaromyces marneffei (strain ATCC 18224 / CBS 334.59 / QM 7333) (Penicillium marneffei) protein is Probable Xaa-Pro aminopeptidase PMAA_074180.